Reading from the N-terminus, the 324-residue chain is MKRNIAIVAGGDTSEIVVSLRSAQGIYSFIDKEKYNLYIVEMEGRRWEVQLQDGSKTPVDRNDFSFMNGAEKVVFDFAYITIHGTPGEDGRLQGYFDMIRIPYSCCGVLAAAITYDKFVCNQYLKAFGVRISESLLLRQGQAVSDEDVVEKIGLPCFIKPNLGGSSFGVTKVKTREQIQPAIAKAFSEAEEVMIEAFMGGTELTCGCYKTKEKSVVFPLTEVVTHNEFFDYDAKYNGQVDEITPARISEELTRRVQTLTSAIYDILGCSGIIRVDYIITEGEKINLLEVNTTPGMTATSFIPQQVRAAGLDIKDVMTDIIENKF.

Residues 121–321 form the ATP-grasp domain; sequence NQYLKAFGVR…IKDVMTDIIE (201 aa). 149–204 is an ATP binding site; the sequence is VEKIGLPCFIKPNLGGSSFGVTKVKTREQIQPAIAKAFSEAEEVMIEAFMGGTELT. The Mg(2+) site is built by D275, E288, and N290.

It belongs to the D-alanine--D-alanine ligase family. Mg(2+) is required as a cofactor. Requires Mn(2+) as cofactor.

It localises to the cytoplasm. It catalyses the reaction 2 D-alanine + ATP = D-alanyl-D-alanine + ADP + phosphate + H(+). The protein operates within cell wall biogenesis; peptidoglycan biosynthesis. Functionally, cell wall formation. This chain is D-alanine--D-alanine ligase, found in Bacteroides fragilis (strain ATCC 25285 / DSM 2151 / CCUG 4856 / JCM 11019 / LMG 10263 / NCTC 9343 / Onslow / VPI 2553 / EN-2).